A 78-amino-acid polypeptide reads, in one-letter code: DNA import protein CedA1 (78 aa).

The next 2 membrane-spanning stretches (helical) occupy residues 12 to 32 and 53 to 73; these read STVTEIGWSLFILAWAIGWAL and AIIAAFFLAIGSTIFYLISYI.

As to quaternary structure, forms a complex composed of CedA, CedA1 and CedA2.

Its subcellular location is the cell membrane. Part of the Ced system, which is involved in DNA import. This chain is DNA import protein CedA1, found in Sulfolobus acidocaldarius (strain ATCC 33909 / DSM 639 / JCM 8929 / NBRC 15157 / NCIMB 11770).